Consider the following 1481-residue polypeptide: Cystic fibrosis transmembrane conductance regulator (1481 aa).

Residues 1–77 lie on the Cytoplasmic side of the membrane; it reads MQRSPLEKAS…KLINALRRCF (77 aa). Residues 78–98 traverse the membrane as a helical segment; sequence FWRFTFYGILLYLGEVTKAVQ. One can recognise an ABC transmembrane type-1 1 domain in the interval 81–365; sequence FTFYGILLYL…WAVQTWYDSL (285 aa). The Extracellular segment spans residues 99-122; the sequence is PLLLGRIIASYDPDNKTERSIAIY. The helical transmembrane segment at 123–146 threads the bilayer; that stretch reads LGIGLCLLFIVRTLLLHPAIFGLH. The Cytoplasmic portion of the chain corresponds to 147 to 195; it reads HIGMQMRIAMFSLIYKKTLKLSSRVLDKISIGQLVSLLSNNLNKFDEGL. The helical transmembrane segment at 196–216 threads the bilayer; it reads ALAHFVWIAPLQVALLMGLIW. Over 217 to 222 the chain is Extracellular; the sequence is ELLQAS. Residues 223-243 form a helical membrane-spanning segment; the sequence is AFCGLGFLIVLALFQAGLGRM. Topologically, residues 244 to 298 are cytoplasmic; that stretch reads MMKYRDQRAGKINERLVITSEMIENIQSVKAYCWEEAMEKMIENLRQTELKLTRK. The helical transmembrane segment at 299–319 threads the bilayer; sequence AAYVRYFNSSAFFFSGFFVVF. Topologically, residues 320 to 339 are extracellular; it reads LSVLPYALIKGIALRKIFTT. A helical membrane pass occupies residues 340-358; it reads ISFCIVLRMAVTRQFPWAV. The Cytoplasmic portion of the chain corresponds to 359-858; sequence QTWYDSLGAI…YLRYITLHKS (500 aa). Residues W401, S434, 458 to 465, and Q493 contribute to the ATP site; that span reads GSTGAGKT. Residues 423 to 646 form the ABC transporter 1 domain; that stretch reads NGDDNLFFSN…RPDFSSKLMG (224 aa). C524 carries the S-palmitoyl cysteine lipid modification. S549 and S660 each carry phosphoserine. The segment at 654-831 is disordered R region; sequence SSERRNSILT…EEINEEDLKE (178 aa). Residue S670 is modified to Phosphoserine; by PKA. Position 686 is a phosphoserine (S686). K688 is covalently cross-linked (Glycyl lysine isopeptide (Lys-Gly) (interchain with G-Cter in ubiquitin)). Residues S700 and S712 each carry the phosphoserine modification. At T717 the chain carries Phosphothreonine. S737, S753, S768, S790, S795, and S813 each carry phosphoserine. The helical transmembrane segment at 859–879 threads the bilayer; sequence LIFVLIWCLVIFLAEVAASLV. An ABC transmembrane type-1 2 domain is found at 859-1155; sequence LIFVLIWCLV…AVNSSIDVDS (297 aa). Over 880-918 the chain is Extracellular; the sequence is LLWLLGNTRFQDKGNSTYSRNNSYAVIITNTSSYYVFYI. Residues N894, N900, and N909 are each glycosylated (N-linked (GlcNAc...) asparagine). A discontinuously helical transmembrane segment spans residues 919 to 939; the sequence is YVGVADTLLALGFFRGLPLVH. Over 940–990 the chain is Cytoplasmic; that stretch reads TLITVSKILHHKMLHSVLQAPMSTLNTLKAGGILNRFSKDIAILDDLLPLT. Residues 991 to 1011 form a helical membrane-spanning segment; sequence IFDFIQLLLIVIGAIAVVSVL. At 1012–1013 the chain is on the extracellular side; it reads QP. A helical transmembrane segment spans residues 1014-1034; that stretch reads YIFLATVPVIAAFILLRAYFL. Over 1035-1095 the chain is Cytoplasmic; the sequence is QTSQQLKQLE…TASWFLYLST (61 aa). Residues 1096–1116 form a helical membrane-spanning segment; sequence LRWFQMRIEMIFVIFFIAVTF. Residues 1117-1130 lie on the Extracellular side of the membrane; it reads ISILTTGEGEGTVG. The helical transmembrane segment at 1131 to 1151 threads the bilayer; sequence IILTLAMNIMSTLQWAVNSSI. At 1152–1481 the chain is on the cytoplasmic side; the sequence is DVDSLMRSVS…TEEEVQETRL (330 aa). The ABC transporter 2 domain maps to 1211–1444; that stretch reads MTIKDLTAKY…KSLFRQAISH (234 aa). ATP is bound by residues Y1220 and 1245-1252; that span reads GRTGSGKS. The interaction with GORASP2 stretch occupies residues 1387 to 1481; the sequence is RALKQAFADC…TEEEVQETRL (95 aa). C1396 carries S-palmitoyl cysteine lipidation. 2 positions are modified to phosphoserine: S1445 and S1457. The interval 1453–1481 is disordered; it reads HRNSSKYKSRPQIASLKEETEEEVQETRL. The segment covering 1471 to 1481 has biased composition (acidic residues); it reads ETEEEVQETRL. A PDZ-binding motif is present at residues 1479–1481; the sequence is TRL.

The protein belongs to the ABC transporter superfamily. ABCC family. CFTR transporter (TC 3.A.1.202) subfamily. As to quaternary structure, monomer; does not require oligomerization for channel activity. May form oligomers in the membrane. Interacts with SLC26A3, SLC26A6 and NHERF1. Interacts with SHANK2. Interacts with MYO6. Interacts (via C-terminus) with GOPC (via PDZ domain); this promotes CFTR internalization and thereby decreases channel activity. Interacts with SLC4A7 through NHERF1. Found in a complex with MYO5B and RAB11A. Interacts with ANO1. Interacts with SLC26A8. Interacts with AHCYL1; the interaction increases CFTR activity. Interacts with CSE1L. The core-glycosylated form interacts with GORASP2 (via PDZ GRASP-type 1 domain) in respone to ER stress. Interacts with MARCHF2; the interaction leads to CFTR ubiqtuitination and degradation. Interacts with ADGRG2. Post-translationally, N-glycosylated. In terms of processing, phosphorylated; cAMP treatment promotes phosphorylation and activates the channel. Dephosphorylation decreases the ATPase activity (in vitro). Phosphorylation at PKA sites activates the channel. Phosphorylation at PKC sites enhances the response to phosphorylation by PKA. Phosphorylated by AMPK; this inhibits channel activity. Ubiquitinated, leading to its degradation in the lysosome. Deubiquitination by USP10 in early endosomes enhances its endocytic recycling to the cell membrane. Ubiquitinated by RNF185 during ER stress. Ubiquitinated by MARCHF2.

The protein localises to the apical cell membrane. The protein resides in the early endosome membrane. It is found in the cell membrane. Its subcellular location is the recycling endosome membrane. It localises to the endoplasmic reticulum membrane. The protein localises to the nucleus. It catalyses the reaction ATP + H2O + closed Cl(-) channel = ADP + phosphate + open Cl(-) channel.. It carries out the reaction chloride(in) = chloride(out). The enzyme catalyses hydrogencarbonate(in) = hydrogencarbonate(out). The catalysed reaction is ATP + H2O = ADP + phosphate + H(+). In terms of biological role, epithelial ion channel that plays an important role in the regulation of epithelial ion and water transport and fluid homeostasis. Mediates the transport of chloride ions across the cell membrane. Possesses an intrinsic ATPase activity and utilizes ATP to gate its channel; the passive flow of anions through the channel is gated by cycles of ATP binding and hydrolysis by the ATP-binding domains. The ion channel is also permeable to HCO(3)(-); selectivity depends on the extracellular chloride concentration. Exerts its function also by modulating the activity of other ion channels and transporters. Contributes to the regulation of the pH and the ion content of the epithelial fluid layer. Modulates the activity of the epithelial sodium channel (ENaC) complex, in part by regulating the cell surface expression of the ENaC complex. May regulate bicarbonate secretion and salvage in epithelial cells by regulating the transporter SLC4A7. Can inhibit the chloride channel activity of ANO1. Plays a role in the chloride and bicarbonate homeostasis during sperm epididymal maturation and capacitation. The polypeptide is Cystic fibrosis transmembrane conductance regulator (Saimiri boliviensis boliviensis (Bolivian squirrel monkey)).